The sequence spans 39 residues: Mu-theraphotoxin-Ae1a (39 aa).

3 disulfides stabilise this stretch: Cys7–Cys21, Cys14–Cys26, and Cys20–Cys33. At Phe39 the chain carries Phenylalanine amide.

Belongs to the neurotoxin 10 (Hwtx-1) family. 47 subfamily. In terms of tissue distribution, expressed by the venom gland.

It localises to the secreted. In terms of biological role, insecticidal toxin that acts, at least partially, by inhibiting insect voltage-gated sodium (NaV) channels of several insect species. The toxin binds to the voltage sensor in NaV channel domain II and inhibits channel opening by shifting the threshold for channel activation to more positive voltages. The toxin binding is sensitive to residues in the S1-S2 loop of the domain II voltage sensor. In vivo, the recombinant toxin causes paralysis and/or death to two dipteran species (Lucilia cuprina and Drosophila melanogaster). In contrast, the toxin does not show paralytic or lethal effect on the cotton bollworm Helicoverpa armigera and the triatomine bug Rhodinius prolixus. The sequence is that of Mu-theraphotoxin-Ae1a from Augacephalus ezendami (Mozambique baboon spider).